We begin with the raw amino-acid sequence, 354 residues long: Histidinol-phosphate aminotransferase 1 (354 aa).

At lysine 209 the chain carries N6-(pyridoxal phosphate)lysine.

Belongs to the class-II pyridoxal-phosphate-dependent aminotransferase family. Histidinol-phosphate aminotransferase subfamily. As to quaternary structure, homodimer. Pyridoxal 5'-phosphate is required as a cofactor.

It carries out the reaction L-histidinol phosphate + 2-oxoglutarate = 3-(imidazol-4-yl)-2-oxopropyl phosphate + L-glutamate. The protein operates within amino-acid biosynthesis; L-histidine biosynthesis; L-histidine from 5-phospho-alpha-D-ribose 1-diphosphate: step 7/9. The protein is Histidinol-phosphate aminotransferase 1 (hisC1) of Oceanobacillus iheyensis (strain DSM 14371 / CIP 107618 / JCM 11309 / KCTC 3954 / HTE831).